The sequence spans 656 residues: Solute carrier family 5 member 4A (656 aa).

At 1–28 (MASTASVSTSTASSELSSLSNNINNAAD) the chain is on the cytoplasmic side. The helical transmembrane segment at 29 to 47 (ISVIVIYFVVVMAVGVWAM) threads the bilayer. Over 48 to 64 (LKTNRSTVGGFFLAGRS) the chain is Extracellular. A helical membrane pass occupies residues 65–85 (MTWWPMGASLFASNIGSGHFV). Residues 86–105 (GLAGTGAASGIAVTAFESHS) are Cytoplasmic-facing. The chain crosses the membrane as a helical span at residues 106–126 (FALLLVLGWIFVPIYIKAGVM). At 127-171 (TMPEYLKKRFGGKRLQIYLSILFLFICVILTISADIFSGAIFIKL) the chain is on the extracellular side. A helical membrane pass occupies residues 172–191 (ALGLNLYLAILILLAITAIF). Topologically, residues 192-208 (TITGGLASVIYTDTVQA) are cytoplasmic. Residues 209-229 (VIMLVGSFILMVFAFVEVGGY) form a helical membrane-spanning segment. Over 230–270 (ESFTEKFMNAIPSVVEGDNLTINSRCYTPQPDSFHIFRDPV) the chain is Extracellular. Residue Asn-248 is glycosylated (N-linked (GlcNAc...) asparagine). Residues 271 to 291 (TGDIPWPGTAFGMPITALWYW) traverse the membrane as a helical segment. Residues 292-314 (CINQVIVQRCLCGKNLSHVKAAC) lie on the Cytoplasmic side of the membrane. The chain crosses the membrane as a helical span at residues 315–334 (ILCGYLKLLPLFFMVMPGMI). Residues 335–423 (SRILYTDMVA…RKKASERELL (89 aa)) are Extracellular-facing. A helical transmembrane segment spans residues 424-443 (IAGRLFVSVLIVTSILWVPI). The Cytoplasmic portion of the chain corresponds to 444–455 (VEVSQGGQLVHY). A helical transmembrane segment spans residues 456 to 476 (TEAISSYLGPPIAAVFLVAVF). The Extracellular portion of the chain corresponds to 477 to 526 (CKRANEQGAFWGLMVGLVMGLIRMIAEFSYGTGSCLAPSSCPKIICGVHY). Residues 527 to 547 (LYFAIILFFVCILVILGVSYL) form a helical membrane-spanning segment. Residues 548-634 (TKPIPDVHLH…TDTTEKPFWR (87 aa)) are Cytoplasmic-facing. Residues 574 to 593 (DAEDKEENGADDRTEEDQTE) are disordered. The helical transmembrane segment at 635–655 (TVMNVNVILLLAVAAFFYGYF) threads the bilayer.

Belongs to the sodium:solute symporter (SSF) (TC 2.A.21) family. Expressed in small intestine. Expressed in kidney.

The protein localises to the cell membrane. With respect to regulation, not inhibited by phlorizin. Its function is as follows. Does not function as sodium/D-glucose symporter. Generates D-glucose-induced depolarization in a pH-dependent manner, with activity in acidic conditions (pH 5) but not neutral conditions. This is Solute carrier family 5 member 4A from Mus musculus (Mouse).